We begin with the raw amino-acid sequence, 720 residues long: Phosphatase and actin regulator 4 (720 aa).

The disordered stretch occupies residues 1–48 (MGQPRFSRPVHPAAAAEEVDHPPSDAGMGVDVLESGDTTPPTKRKSKF). One copy of the RPEL 1 repeat lies at 74–99 (EVLERKISMRKPREELVKRGVLLEDP). Disordered regions lie at residues 294 to 417 (SGTG…GLPR), 454 to 568 (NDGF…DTLA), and 610 to 648 (RPTAEELEQRNILQPKNEADRQAEKREIKRRLTRKLSQR). Over residues 346-368 (TYPPPSPSPPLPTHIPPEPPRMP) the composition is skewed to pro residues. Positions 393–405 (KDFRSLEVSKRTA) are enriched in basic and acidic residues. 3 stretches are compositionally biased toward acidic residues: residues 481–494 (DDEEEEEEDQEEEQ), 521–534 (EEQEGEEGMSDSDS), and 542–551 (DDEEDEEEDE). RPEL repeat units lie at residues 601–626 (TTLIRRLSQRPTAEELEQRNILQPKN) and 639–664 (RRLTRKLSQRPTVAELQARKILRFNE). Over residues 626 to 636 (NEADRQAEKRE) the composition is skewed to basic and acidic residues. The segment covering 637–646 (IKRRLTRKLS) has biased composition (basic residues).

The protein belongs to the phosphatase and actin regulator family. As to quaternary structure, binds PPP1CA and actin.

The protein localises to the cytoplasm. It is found in the cell projection. It localises to the lamellipodium. Its function is as follows. Regulator of protein phosphatase 1 (PP1) required for neural tube and optic fissure closure, and enteric neural crest cell (ENCCs) migration during development. Acts as an activator of PP1. During neural tube closure, localizes to the ventral neural tube and activates PP1, leading to down-regulate cell proliferation within cranial neural tissue and the neural retina. Also acts as a regulator of migration of enteric neural crest cells (ENCCs) by activating PP1, leading to repression of the integrin signaling through the RHO/ROCK pathway. In Gallus gallus (Chicken), this protein is Phosphatase and actin regulator 4 (PHACTR4).